The primary structure comprises 205 residues: Probable GTP-binding protein EngB (205 aa).

Residues 29 to 203 (QGAEIAFIGR…KAVLSQWFSS (175 aa)) enclose the EngB-type G domain. Residues 37–44 (GRSNAGKS), 64–68 (GRTQM), 82–85 (DLPG), 149–152 (TKSD), and 182–184 (FSS) contribute to the GTP site. Mg(2+) contacts are provided by Ser44 and Thr66.

The protein belongs to the TRAFAC class TrmE-Era-EngA-EngB-Septin-like GTPase superfamily. EngB GTPase family. It depends on Mg(2+) as a cofactor.

Functionally, necessary for normal cell division and for the maintenance of normal septation. The chain is Probable GTP-binding protein EngB from Coxiella burnetii (strain CbuK_Q154) (Coxiella burnetii (strain Q154)).